A 714-amino-acid chain; its full sequence is Hormonally up-regulated neu tumor-associated kinase (714 aa).

The span at 1-15 shows a compositional bias: low complexity; the sequence is MPAAAGDGLLGEPAA. Positions 1–26 are disordered; the sequence is MPAAAGDGLLGEPAAPGGGGGAEDAA. One can recognise a Protein kinase domain in the interval 62–320; it reads LIGSRKLGEG…IQQALANRWL (259 aa). Residues 68–76 and Lys91 contribute to the ATP site; that span reads LGEGSFAKV. Asp186 serves as the catalytic Proton acceptor. The segment covering 437–461 has biased composition (basic and acidic residues); it reads KKPKEQEKRGDFLHRPFSKKLDKNL. 3 disordered regions span residues 437–471, 518–552, and 590–660; these read KKPK…SGSL, MEFI…HKED, and ARRN…VKSR. Residues 599–611 are compositionally biased toward low complexity; it reads LSPGLPSGSMSPL. Basic and acidic residues predominate over residues 623-635; that stretch reads AHEDKNSPPKEEG.

It belongs to the protein kinase superfamily. CAMK Ser/Thr protein kinase family. SNF1 subfamily.

The catalysed reaction is L-seryl-[protein] + ATP = O-phospho-L-seryl-[protein] + ADP + H(+). The enzyme catalyses L-threonyl-[protein] + ATP = O-phospho-L-threonyl-[protein] + ADP + H(+). This is Hormonally up-regulated neu tumor-associated kinase (HUNK) from Pan troglodytes (Chimpanzee).